Reading from the N-terminus, the 233-residue chain is Endo-1,4-beta-xylanase 1 (233 aa).

An N-terminal signal peptide occupies residues 1–20 (MVSFTSIVTAVVALAGSALA). The N-linked (GlcNAc...) asparagine glycan is linked to Asn-27. Residues 40–230 (QSTPSSTGRH…SAGNSNINVQ (191 aa)) form the GH11 domain. Glu-126 serves as the catalytic Nucleophile. Catalysis depends on Glu-217, which acts as the Proton donor.

The protein belongs to the glycosyl hydrolase 11 (cellulase G) family.

The protein localises to the secreted. The catalysed reaction is Endohydrolysis of (1-&gt;4)-beta-D-xylosidic linkages in xylans.. Its pathway is glycan degradation; xylan degradation. Its function is as follows. Endo-1,4-beta-xylanase involved in the hydrolysis of xylan, a major structural heterogeneous polysaccharide found in plant biomass representing the second most abundant polysaccharide in the biosphere, after cellulose. Accounts for approximately 70 percent of the endoxylanase activity in the culture filtrate. The polypeptide is Endo-1,4-beta-xylanase 1 (XYL1) (Pyricularia grisea (Crabgrass-specific blast fungus)).